Consider the following 380-residue polypeptide: Queuine tRNA-ribosyltransferase (380 aa).

Residue aspartate 96 is the Proton acceptor of the active site. Residues 96–100 (DSGGF), aspartate 150, glutamine 193, and glycine 220 each bind substrate. The tract at residues 251 to 257 (GVGAPDS) is RNA binding. Aspartate 270 serves as the catalytic Nucleophile. Residues 275 to 279 (TRIAR) are RNA binding; important for wobble base 34 recognition. Positions 308, 310, 313, and 339 each coordinate Zn(2+).

It belongs to the queuine tRNA-ribosyltransferase family. As to quaternary structure, homodimer. Within each dimer, one monomer is responsible for RNA recognition and catalysis, while the other monomer binds to the replacement base PreQ1. Zn(2+) serves as cofactor.

The enzyme catalyses 7-aminomethyl-7-carbaguanine + guanosine(34) in tRNA = 7-aminomethyl-7-carbaguanosine(34) in tRNA + guanine. It functions in the pathway tRNA modification; tRNA-queuosine biosynthesis. In terms of biological role, catalyzes the base-exchange of a guanine (G) residue with the queuine precursor 7-aminomethyl-7-deazaguanine (PreQ1) at position 34 (anticodon wobble position) in tRNAs with GU(N) anticodons (tRNA-Asp, -Asn, -His and -Tyr). Catalysis occurs through a double-displacement mechanism. The nucleophile active site attacks the C1' of nucleotide 34 to detach the guanine base from the RNA, forming a covalent enzyme-RNA intermediate. The proton acceptor active site deprotonates the incoming PreQ1, allowing a nucleophilic attack on the C1' of the ribose to form the product. After dissociation, two additional enzymatic reactions on the tRNA convert PreQ1 to queuine (Q), resulting in the hypermodified nucleoside queuosine (7-(((4,5-cis-dihydroxy-2-cyclopenten-1-yl)amino)methyl)-7-deazaguanosine). In Streptococcus agalactiae serotype Ia (strain ATCC 27591 / A909 / CDC SS700), this protein is Queuine tRNA-ribosyltransferase.